The following is a 147-amino-acid chain: UPF0178 protein VIBHAR_03247 (147 aa).

The protein belongs to the UPF0178 family.

In Vibrio campbellii (strain ATCC BAA-1116), this protein is UPF0178 protein VIBHAR_03247.